The primary structure comprises 163 residues: Peptidyl-prolyl cis-trans isomerase FKBP15-2 (163 aa).

The N-terminal stretch at methionine 1–alanine 25 is a signal peptide. The region spanning glycine 52–asparagine 140 is the PPIase FKBP-type domain. The disordered stretch occupies residues lysine 142–leucine 163. The span at tyrosine 149–leucine 163 shows a compositional bias: acidic residues. Residues asparagine 160–leucine 163 carry the Prevents secretion from ER motif.

It belongs to the FKBP-type PPIase family.

It localises to the endoplasmic reticulum lumen. The enzyme catalyses [protein]-peptidylproline (omega=180) = [protein]-peptidylproline (omega=0). Its function is as follows. PPIases accelerate the folding of proteins. It catalyzes the cis-trans isomerization of proline imidic peptide bonds in oligopeptides. The chain is Peptidyl-prolyl cis-trans isomerase FKBP15-2 (FKBP15-2) from Arabidopsis thaliana (Mouse-ear cress).